We begin with the raw amino-acid sequence, 383 residues long: Succinyl-diaminopimelate desuccinylase (383 aa).

His-73 contacts Zn(2+). The active site involves Asp-75. Asp-107 is a binding site for Zn(2+). The active-site Proton acceptor is the Glu-141. Zn(2+)-binding residues include Glu-142, Glu-170, and His-356.

The protein belongs to the peptidase M20A family. DapE subfamily. In terms of assembly, homodimer. Requires Zn(2+) as cofactor. It depends on Co(2+) as a cofactor.

It carries out the reaction N-succinyl-(2S,6S)-2,6-diaminopimelate + H2O = (2S,6S)-2,6-diaminopimelate + succinate. Its pathway is amino-acid biosynthesis; L-lysine biosynthesis via DAP pathway; LL-2,6-diaminopimelate from (S)-tetrahydrodipicolinate (succinylase route): step 3/3. Catalyzes the hydrolysis of N-succinyl-L,L-diaminopimelic acid (SDAP), forming succinate and LL-2,6-diaminopimelate (DAP), an intermediate involved in the bacterial biosynthesis of lysine and meso-diaminopimelic acid, an essential component of bacterial cell walls. This is Succinyl-diaminopimelate desuccinylase from Pseudomonas aeruginosa (strain UCBPP-PA14).